Reading from the N-terminus, the 67-residue chain is Spiniferin (67 aa).

The first 23 residues, 1–23, serve as a signal peptide directing secretion; it reads MKTQLAILLITLVLFQMFSQSDA. L36 bears the Leucine amide mark. A propeptide spanning residues 40 to 67 is cleaved from the precursor; it reads GLNDLSDLDELFDGEISKADLDFLREIM.

It belongs to the non-disulfide-bridged peptide (NDBP) superfamily. Short antimicrobial peptide (group 4) family. In terms of tissue distribution, expressed by the venom gland.

Its subcellular location is the secreted. The protein resides in the target cell membrane. Functionally, alpha-helical and amphipathic peptide with weak antimicrobial activities against both Gram-positive (MIC=41 uM to &gt;82 uM) and Gram-negative (MIC&gt;82 uM) bacteria. It has extremely weak hemolytic activity against human erythrocytes. The protein is Spiniferin of Heterometrus spinifer (Asia giant forest scorpion).